Reading from the N-terminus, the 528-residue chain is GMP synthase [glutamine-hydrolyzing] (528 aa).

Residues 13 to 204 (SILILDFGSQ…VYSISKCKAD (192 aa)) form the Glutamine amidotransferase type-1 domain. C90 functions as the Nucleophile in the catalytic mechanism. Active-site residues include H178 and E180. The GMPS ATP-PPase domain occupies 205 to 403 (WNTETFLEET…LGLPDEIIKR (199 aa)). 232–238 (SGGVDSS) lines the ATP pocket.

As to quaternary structure, homodimer.

The catalysed reaction is XMP + L-glutamine + ATP + H2O = GMP + L-glutamate + AMP + diphosphate + 2 H(+). It functions in the pathway purine metabolism; GMP biosynthesis; GMP from XMP (L-Gln route): step 1/1. Functionally, catalyzes the synthesis of GMP from XMP. The polypeptide is GMP synthase [glutamine-hydrolyzing] (Prochlorococcus marinus (strain MIT 9515)).